The chain runs to 123 residues: Non-specific lipid-transfer protein (123 aa).

The first 25 residues, 1-25, serve as a signal peptide directing secretion; it reads MAVKKMVEAVFVVGLVVTMMNVWGA. Intrachain disulfides connect Cys34–Cys82, Cys44–Cys59, Cys60–Cys104, and Cys80–Cys119.

It belongs to the plant LTP family.

In terms of biological role, plant non-specific lipid-transfer proteins transfer phospholipids as well as galactolipids across membranes. May play a role in wax or cutin deposition in the cell walls of expanding epidermal cells and certain secretory tissues. The polypeptide is Non-specific lipid-transfer protein (Pinus taeda (Loblolly pine)).